Here is a 334-residue protein sequence, read N- to C-terminus: Atypical chemokine receptor 1 (334 aa).

At 1–61 (MGNCLYPVET…CNLLDRSSLP (61 aa)) the chain is on the extracellular side. N16, N26, and N32 each carry an N-linked (GlcNAc...) asparagine glycan. Intrachain disulfides connect C49-C274 and C127-C193. Residues 62–82 (FFMLTSVLGMLASGSILFAIL) form a helical membrane-spanning segment. Topologically, residues 83 to 93 (RPFFHWQICPS) are cytoplasmic. The chain crosses the membrane as a helical span at residues 94 to 114 (WPILAELAVGSALFSIAVPIL). At 115–127 (APGLHSAHSTALC) the chain is on the extracellular side. A helical membrane pass occupies residues 128 to 151 (NLGYWVWYTSAFAQALLIGCYACL). Residues 152–164 (NPRLNIGQLRGFT) lie on the Cytoplasmic side of the membrane. The chain crosses the membrane as a helical span at residues 165 to 185 (LGLSVGLWGAAALSGLPVALA). Over 186–205 (SDVYNGFCTFPSSRDMEALK) the chain is Extracellular. The helical transmembrane segment at 206 to 226 (YTHYAICFTIFTVLPLTLLAA) threads the bilayer. Over 227 to 242 (KGLKIALSKGPGPWVS) the chain is Cytoplasmic. A helical transmembrane segment spans residues 243–263 (VLWIWFIFWWPHGMVLIFDAL). Residues 264-285 (VRSKTVLLYTCQSQKILDAMLN) are Extracellular-facing. N-linked (GlcNAc...) asparagine glycosylation is present at N285. Residues 286-306 (VTEALSMLHCVATPLLLALFC) traverse the membrane as a helical segment. Over 307 to 334 (HQTTRRSLSSLSLPTRQASQMDALAGKS) the chain is Cytoplasmic.

This sequence belongs to the G-protein coupled receptor 1 family. Atypical chemokine receptor subfamily. Expressed in liver and brain.

It is found in the early endosome. It localises to the recycling endosome. The protein resides in the membrane. Its function is as follows. Atypical chemokine receptor that controls chemokine levels and localization via high-affinity chemokine binding that is uncoupled from classic ligand-driven signal transduction cascades, resulting instead in chemokine sequestration, degradation, or transcytosis. Also known as interceptor (internalizing receptor) or chemokine-scavenging receptor or chemokine decoy receptor. Has a promiscuous chemokine-binding profile, interacting with inflammatory chemokines of both the CXC and the CC subfamilies but not with homeostatic chemokines. Acts as a receptor for chemokines including CCL2, CCL5, CCL7, CCL11, CCL13, CCL14, CCL17, CXCL5, CXCL6, IL8/CXCL8, CXCL11, GRO, RANTES, MCP-1 and TARC. May regulate chemokine bioavailability and, consequently, leukocyte recruitment through two distinct mechanisms: when expressed in endothelial cells, it sustains the abluminal to luminal transcytosis of tissue-derived chemokines and their subsequent presentation to circulating leukocytes; when expressed in erythrocytes, serves as blood reservoir of cognate chemokines but also as a chemokine sink, buffering potential surges in plasma chemokine levels. (Microbial infection) Acts as a receptor for the malaria parasite Plasmodium yoelii in mature erythrocytes but not reticulocytes. The polypeptide is Atypical chemokine receptor 1 (Ackr1) (Mus musculus (Mouse)).